The chain runs to 136 residues: General odorant-binding protein 57e (136 aa).

The first 20 residues, M1–A20, serve as a signal peptide directing secretion. 3 disulfide bridges follow: C28/C61, C57/C109, and C98/C118.

Belongs to the PBP/GOBP family.

Functionally, present in the aqueous fluid surrounding olfactory sensory dendrites and are thought to aid in the capture and transport of hydrophobic odorants into and through this fluid. This chain is General odorant-binding protein 57e, found in Drosophila melanogaster (Fruit fly).